The primary structure comprises 195 residues: IMP cyclohydrolase (195 aa).

It belongs to the archaeal IMP cyclohydrolase family.

The enzyme catalyses IMP + H2O = 5-formamido-1-(5-phospho-D-ribosyl)imidazole-4-carboxamide. Its pathway is purine metabolism; IMP biosynthesis via de novo pathway; IMP from 5-formamido-1-(5-phospho-D-ribosyl)imidazole-4-carboxamide: step 1/1. Catalyzes the cyclization of 5-formylamidoimidazole-4-carboxamide ribonucleotide to IMP. The chain is IMP cyclohydrolase from Haloquadratum walsbyi (strain DSM 16790 / HBSQ001).